Here is a 159-residue protein sequence, read N- to C-terminus: Transmembrane protein 89 (159 aa).

The N-terminal stretch at 1–24 (MLHVLASLPLLLLLVTSASTHAWS) is a signal peptide. Over 25–63 (RPLWYQVGLDLQPWGCQPKSVEGCRGGLSCPGYWLGPGA) the chain is Extracellular. The chain crosses the membrane as a helical span at residues 64-86 (SRIYPVAAVMITTTMLMICRKIL). The Cytoplasmic segment spans residues 87 to 159 (QGRRRSQATK…QIKGTSTQSG (73 aa)). The segment at 91–110 (RSQATKGEHPQVTTEPCGPW) is disordered.

Its subcellular location is the membrane. The protein is Transmembrane protein 89 (TMEM89) of Homo sapiens (Human).